The sequence spans 152 residues: MQLTELIETTVVGLGYELVDLERTGRGMLCIYIDQPAGIAIEDCEKVTRQLQHVLTVENIDYERLEVSSPGLDRPLKKLADFERFAGSEAVITLKKPLDGRKSYRGILHAPEGETIGLEFEGKEGAAMLDFTLADIDKARLVPKVDFRSRKQ.

The protein belongs to the RimP family.

It localises to the cytoplasm. Functionally, required for maturation of 30S ribosomal subunits. The protein is Ribosome maturation factor RimP of Paraburkholderia phymatum (strain DSM 17167 / CIP 108236 / LMG 21445 / STM815) (Burkholderia phymatum).